Consider the following 204-residue polypeptide: Colicin-A (204 aa).

Transmembrane regions (helical) follow at residues 139–161 (SWVLSGIASSVALGIFSATLGAY) and 165–187 (LGVPAIAVGIAGILLAAVVGALI).

The protein belongs to the channel forming colicin family.

Its subcellular location is the cell membrane. Functionally, this colicin is a channel-forming colicin. This class of transmembrane toxins depolarize the cytoplasmic membrane, leading to dissipation of cellular energy. Colicins are polypeptide toxins produced by and active against E.coli and closely related bacteria. The polypeptide is Colicin-A (caa) (Escherichia coli).